Consider the following 498-residue polypeptide: ATP synthase subunit beta, chloroplastic (498 aa).

Position 172-179 (172-179) interacts with ATP; that stretch reads GGAGVGKT.

This sequence belongs to the ATPase alpha/beta chains family. In terms of assembly, F-type ATPases have 2 components, CF(1) - the catalytic core - and CF(0) - the membrane proton channel. CF(1) has five subunits: alpha(3), beta(3), gamma(1), delta(1), epsilon(1). CF(0) has four main subunits: a(1), b(1), b'(1) and c(9-12).

It is found in the plastid. The protein localises to the chloroplast thylakoid membrane. It carries out the reaction ATP + H2O + 4 H(+)(in) = ADP + phosphate + 5 H(+)(out). Functionally, produces ATP from ADP in the presence of a proton gradient across the membrane. The catalytic sites are hosted primarily by the beta subunits. The polypeptide is ATP synthase subunit beta, chloroplastic (Castanea sativa (Sweet chestnut)).